The following is an 861-amino-acid chain: Integrator complex subunit 6-like (861 aa).

Positions 3 to 227 (ILLFLIDTSA…QCLESLVQKV (225 aa)) constitute a VWFA domain. The segment at 605 to 626 (PQNKVKRPGEPNSPMSSKRRRS) is disordered. Ser-617 bears the Phosphoserine mark.

The sequence is that of Integrator complex subunit 6-like (INTS6L) from Homo sapiens (Human).